The sequence spans 642 residues: Cylicin-1 (642 aa).

2 disordered regions span residues 167–203 (NGEP…NLEY) and 284–607 (NCSQ…CEPF). Positions 191–203 (KTSNSTSETNLEY) are enriched in polar residues. A run of 8 repeats spans residues 294–313 (LKTG…GSKD), 314–344 (AKKE…DSKD), 345–391 (GKKK…KKST), 392–432 (GSTG…SSKK), 433–464 (SKKD…SEGD), 465–500 (STGK…SDLG), 501–526 (VNKK…SKAG), and 527–543 (RRKN…DSSG). Positions 298–316 (GKKERDSDIDSGGSKDAKK) are enriched in basic and acidic residues. Basic residues predominate over residues 317 to 330 (EGKKKGKRESRKKR). Positions 353 to 364 (KKNEIKKKKDTD) are enriched in basic and acidic residues. Residues 388–404 (KKSTGSTGSESVDSKST) are compositionally biased toward low complexity. The segment covering 405-416 (NKVKKQVKKGVM) has biased composition (basic residues). Positions 428–440 (ASSKKSKKDEKKE) are enriched in basic and acidic residues. Positions 454–463 (STDADSESEG) are enriched in acidic residues. The span at 465–488 (STGKKNEKKDKKITKKGEKKDAKK) shows a compositional bias: basic and acidic residues. Over residues 513–523 (SFSDSTSDSYS) the composition is skewed to low complexity. The segment at 527–543 (RRKNVRRSDSESEDSSG) is 8 X approximate tandem repeats.

As to quaternary structure, interacts with proteins of spermatozoa head including ACTL7A, CCIN, FAM209 and SPACA1; the interactions may be necessary for proper acrosome attachment to the nuclear envelope. In terms of tissue distribution, testis.

It is found in the cytoplasm. It localises to the cytoskeleton. The protein resides in the perinuclear theca. The protein localises to the calyx. Its function is as follows. Plays a role in the establishment of normal sperm morphology during spermatogenesis and is required for acrosome attachment to the nuclear envelope. The polypeptide is Cylicin-1 (Mus musculus (Mouse)).